Consider the following 940-residue polypeptide: Pentatricopeptide repeat-containing protein At5g14770, mitochondrial (940 aa).

The N-terminal 24 residues, 1–24 (MIMIRIWNNYKGKYRFFLSNCRSF), are a transit peptide targeting the mitochondrion. PPR repeat units follow at residues 59–93 (YVSLFHTLFRLYLSCERLYGAARTLSAMCTFGVVP), 94–129 (DSRLWNSLIHQFNVNGLVHDQVSLIYSKMIACGVSP), 130–161 (DVFALNVLIHSFCKVGRLSFAISLLRNRVISI), 162–196 (DTVTYNTVISGLCEHGLADEAYQFLSEMVKMGILP), 197–231 (DTVSYNTLIDGFCKVGNFVRAKALVDEISELNLIT), 241–259 (NLHAIEEAYRDMVMSGFDP), 260–294 (DVVTFSSIINRLCKGGKVLEGGLLLREMEEMSVYP), 295–329 (NHVTYTTLVDSLFKANIYRHALALYSQMVVRGIPV), 330–364 (DLVVYTVLMDGLFKAGDLREAEKTFKMLLEDNQVP), 365–399 (NVVTYTALVDGLCKAGDLSSAEFIITQMLEKSVIP), 400–434 (NVVTYSSMINGYVKKGMLEEAVSLLRKMEDQNVVP), 435–469 (NGFTYGTVIDGLFKAGKEEMAIELSKEMRLIGVEE), 470–504 (NNYILDALVNHLKRIGRIKEVKGLVKDMVSKGVTL), 505–539 (DQINYTSLIDVFFKGGDEEAALAWAEEMQERGMPW), 540–573 (DVVSYNVLISGMLKFGKVGADWAYKGMREKGIEP), 574–608 (DIATFNIMMNSQRKQGDSEGILKLWDKMKSCGIKP), 609–643 (SLMSCNIVVGMLCENGKMEEAIHILNQMMLMEIHP), 644–678 (NLTTYRIFLDTSSKHKRADAIFKTHETLLSYGIKL), 679–713 (SRQVYNTLIATLCKLGMTKKAAMVMGDMEARGFIP), 714–748 (DTVTFNSLMHGYFVGSHVRKALSTYSVMMEAGISP), 749–783 (NVATYNTIIRGLSDAGLIKEVDKWLSEMKSRGMRP), 784–818 (DDFTYNALISGQAKIGNMKGSMTIYCEMIADGLVP), 819–853 (KTSTYNVLISEFANVGKMLQARELLKEMGKRGVSP), and 854–891 (NTSTYCTMISGLCKLCTHPDVEWNKKAMYLAEAKGLLK).

Belongs to the PPR family. P subfamily.

The protein localises to the mitochondrion. This is Pentatricopeptide repeat-containing protein At5g14770, mitochondrial from Arabidopsis thaliana (Mouse-ear cress).